A 500-amino-acid polypeptide reads, in one-letter code: Chromosomal replication initiator protein DnaA (500 aa).

Residues 1-81 (MVNASGDPVI…LQALRTVTGE (81 aa)) are domain I, interacts with DnaA modulators. A domain II region spans residues 81–155 (ENMFPAFKVV…QQKMNRDPET (75 aa)). The segment at 156 to 377 (HLNKNFTFDS…GALTRVTAVA (222 aa)) is domain III, AAA+ region. ATP-binding residues include Gly200, Gly202, Lys203, and Thr204. A domain IV, binds dsDNA region spans residues 378-500 (SLSNQPVTRA…TVRLKQSNTN (123 aa)).

This sequence belongs to the DnaA family. In terms of assembly, oligomerizes as a right-handed, spiral filament on DNA at oriC.

It localises to the cytoplasm. Its function is as follows. Plays an essential role in the initiation and regulation of chromosomal replication. ATP-DnaA binds to the origin of replication (oriC) to initiate formation of the DNA replication initiation complex once per cell cycle. Binds the DnaA box (a 9 base pair repeat at the origin) and separates the double-stranded (ds)DNA. Forms a right-handed helical filament on oriC DNA; dsDNA binds to the exterior of the filament while single-stranded (ss)DNA is stabiized in the filament's interior. The ATP-DnaA-oriC complex binds and stabilizes one strand of the AT-rich DNA unwinding element (DUE), permitting loading of DNA polymerase. After initiation quickly degrades to an ADP-DnaA complex that is not apt for DNA replication. Binds acidic phospholipids. The chain is Chromosomal replication initiator protein DnaA from Bifidobacterium longum (strain DJO10A).